Consider the following 331-residue polypeptide: UPF0194 membrane protein Ent638_1286 (331 aa).

The signal sequence occupies residues 1-16 (MKKPVVVILAVVVLLA). Positions 107-208 (EEVAQAEAAV…LDLHDTTLIA (102 aa)) form a coiled coil.

The protein belongs to the UPF0194 family.

Its subcellular location is the periplasm. The polypeptide is UPF0194 membrane protein Ent638_1286 (Enterobacter sp. (strain 638)).